The primary structure comprises 425 residues: Serine hydroxymethyltransferase (425 aa).

Residues Leu128 and 132-134 (GHL) contribute to the (6S)-5,6,7,8-tetrahydrofolate site. An N6-(pyridoxal phosphate)lysine modification is found at Lys237.

Belongs to the SHMT family. In terms of assembly, homodimer. It depends on pyridoxal 5'-phosphate as a cofactor.

The protein localises to the cytoplasm. It catalyses the reaction (6R)-5,10-methylene-5,6,7,8-tetrahydrofolate + glycine + H2O = (6S)-5,6,7,8-tetrahydrofolate + L-serine. It participates in one-carbon metabolism; tetrahydrofolate interconversion. Its pathway is amino-acid biosynthesis; glycine biosynthesis; glycine from L-serine: step 1/1. In terms of biological role, catalyzes the reversible interconversion of serine and glycine with tetrahydrofolate (THF) serving as the one-carbon carrier. This reaction serves as the major source of one-carbon groups required for the biosynthesis of purines, thymidylate, methionine, and other important biomolecules. Also exhibits THF-independent aldolase activity toward beta-hydroxyamino acids, producing glycine and aldehydes, via a retro-aldol mechanism. The polypeptide is Serine hydroxymethyltransferase (Wolbachia pipientis subsp. Culex pipiens (strain wPip)).